A 518-amino-acid chain; its full sequence is Probable cytochrome P450 317a1 (518 aa).

Residue cysteine 461 participates in heme binding.

It belongs to the cytochrome P450 family. The cofactor is heme.

The protein resides in the endoplasmic reticulum membrane. It is found in the microsome membrane. Functionally, may be involved in the metabolism of insect hormones and in the breakdown of synthetic insecticides. This chain is Probable cytochrome P450 317a1 (Cyp317a1), found in Drosophila melanogaster (Fruit fly).